The chain runs to 893 residues: Sperm-associated antigen 1 (893 aa).

Positions 112-126 are enriched in basic and acidic residues; that stretch reads ENTRHFHDPEKHPGV. The disordered stretch occupies residues 112–155; it reads ENTRHFHDPEKHPGVEDPLPPVRGSNSCPRGGKETSSKSKTAKK. TPR repeat units lie at residues 213–246, 247–279, and 280–313; these read ANRE…LPTA, TAYN…EPGN, and IKAL…EPDN. Disordered regions lie at residues 324–344, 349–368, and 373–437; these read EREL…KRMV, ENSG…DDGV, and MGNI…SRGN. At Ser351 the chain carries Phosphoserine. Polar residues predominate over residues 403–415; the sequence is QEGQPETGTASTS. Basic and acidic residues predominate over residues 416–437; sequence DNHDLEERRAADSPGDLKSRGN. TPR repeat units lie at residues 429-463, 471-504, 506-538, 605-638, and 639-672; these read PGDL…EPTG, SILY…QPFA, KPLL…DCRI, FQAL…NSKA, and CAIY…DSKN. A GTP-binding site is contributed by 630–637; it reads ECLKINSK. Ser703 carries the post-translational modification Phosphoserine. The tract at residues 704-756 is disordered; sequence PDSSEAARHLDTKNDTAPPSRERERRRIEIQEVDDSSDEEPERPAEASAVEEG. The span at 708-733 shows a compositional bias: basic and acidic residues; it reads EAARHLDTKNDTAPPSRERERRRIEI. A compositionally biased stretch (acidic residues) spans 734–744; sequence QEVDDSSDEEP. 3 positions are modified to phosphoserine: Ser739, Ser740, and Ser758.

As to expression, testis and sperm.

The protein resides in the cytoplasm. Its subcellular location is the dynein axonemal particle. Its function is as follows. May play a role in the cytoplasmic assembly of the ciliary dynein arms. Binds GTP and has GTPase activity. Plays a role in fertilization. The polypeptide is Sperm-associated antigen 1 (Spag1) (Rattus norvegicus (Rat)).